Here is a 71-residue protein sequence, read N- to C-terminus: Immune-induced peptide 18 (71 aa).

Positions 1–24 are cleaved as a signal peptide; that stretch reads MKLIALCCLLLLGLLGFLAAPGVA. Positions 25 to 26 are excised as a propeptide; it reads SP. The segment at 26 to 71 is disordered; that stretch reads PSRHTGPGNGSGSGAGSGNPFRSPSSQQRPLYYDAPIGKPSKTMYA. The segment covering 32–42 has biased composition (gly residues); that stretch reads PGNGSGSGAGS.

Hemolymph (at protein level).

It is found in the secreted. The chain is Immune-induced peptide 18 (IM18) from Drosophila melanogaster (Fruit fly).